A 426-amino-acid chain; its full sequence is Serine--tRNA ligase (426 aa).

233–235 (TSE) is a binding site for L-serine. Position 264-266 (264-266 (RSE)) interacts with ATP. Glutamate 287 contributes to the L-serine binding site. 351 to 354 (EISS) is a binding site for ATP. Position 387 (serine 387) interacts with L-serine.

It belongs to the class-II aminoacyl-tRNA synthetase family. Type-1 seryl-tRNA synthetase subfamily. In terms of assembly, homodimer. The tRNA molecule binds across the dimer.

The protein resides in the cytoplasm. It carries out the reaction tRNA(Ser) + L-serine + ATP = L-seryl-tRNA(Ser) + AMP + diphosphate + H(+). It catalyses the reaction tRNA(Sec) + L-serine + ATP = L-seryl-tRNA(Sec) + AMP + diphosphate + H(+). It participates in aminoacyl-tRNA biosynthesis; selenocysteinyl-tRNA(Sec) biosynthesis; L-seryl-tRNA(Sec) from L-serine and tRNA(Sec): step 1/1. Functionally, catalyzes the attachment of serine to tRNA(Ser). Is also able to aminoacylate tRNA(Sec) with serine, to form the misacylated tRNA L-seryl-tRNA(Sec), which will be further converted into selenocysteinyl-tRNA(Sec). The polypeptide is Serine--tRNA ligase (Xylella fastidiosa (strain 9a5c)).